We begin with the raw amino-acid sequence, 106 residues long: ATP-dependent Clp protease adapter protein ClpS (106 aa).

The protein belongs to the ClpS family. Binds to the N-terminal domain of the chaperone ClpA.

Its function is as follows. Involved in the modulation of the specificity of the ClpAP-mediated ATP-dependent protein degradation. The polypeptide is ATP-dependent Clp protease adapter protein ClpS (Aliivibrio salmonicida (strain LFI1238) (Vibrio salmonicida (strain LFI1238))).